The primary structure comprises 57 residues: Large ribosomal subunit protein bL32 (57 aa).

The tract at residues M1–A21 is disordered. Over residues R7–S18 the composition is skewed to basic residues.

It belongs to the bacterial ribosomal protein bL32 family.

This Mycoplasma pneumoniae (strain ATCC 29342 / M129 / Subtype 1) (Mycoplasmoides pneumoniae) protein is Large ribosomal subunit protein bL32 (rpmF).